The chain runs to 633 residues: Pesticidal crystal protein Cry2Aa (633 aa).

It belongs to the delta endotoxin family.

Promotes colloidosmotic lysis by binding to the midgut epithelial cells of both dipteran (Aedes aegypti) and lepidopteran (Manduca sexta) larvae. The sequence is that of Pesticidal crystal protein Cry2Aa (cry2Aa) from Bacillus thuringiensis subsp. kurstaki.